The sequence spans 377 residues: F-box protein At4g00755 (377 aa).

Positions 7-47 (LDTDTSLSILSCLDDPSDIVRASAVSRSWRQFVVKYSLSKN) constitute an F-box domain.

The chain is F-box protein At4g00755 from Arabidopsis thaliana (Mouse-ear cress).